Consider the following 355-residue polypeptide: 3-dehydroquinate synthase (355 aa).

Residues 71–76 (EGEERK), 105–109 (GVVGD), 129–130 (TS), K142, and K151 contribute to the NAD(+) site. Zn(2+) contacts are provided by E184, H246, and H263.

It belongs to the sugar phosphate cyclases superfamily. Dehydroquinate synthase family. Requires Co(2+) as cofactor. Zn(2+) is required as a cofactor. It depends on NAD(+) as a cofactor.

The protein localises to the cytoplasm. The enzyme catalyses 7-phospho-2-dehydro-3-deoxy-D-arabino-heptonate = 3-dehydroquinate + phosphate. It functions in the pathway metabolic intermediate biosynthesis; chorismate biosynthesis; chorismate from D-erythrose 4-phosphate and phosphoenolpyruvate: step 2/7. Its function is as follows. Catalyzes the conversion of 3-deoxy-D-arabino-heptulosonate 7-phosphate (DAHP) to dehydroquinate (DHQ). In Streptococcus pneumoniae serotype 19F (strain G54), this protein is 3-dehydroquinate synthase.